Consider the following 164-residue polypeptide: Phosphopantetheine adenylyltransferase (164 aa).

Residue S9 coordinates substrate. ATP contacts are provided by residues 9–10 (SF) and H17. Substrate is bound by residues K41, L78, and R92. Residues 93–95 (GLR), E103, and 128–134 (GRVITST) contribute to the ATP site.

Belongs to the bacterial CoaD family. As to quaternary structure, homohexamer. The cofactor is Mg(2+).

It localises to the cytoplasm. It catalyses the reaction (R)-4'-phosphopantetheine + ATP + H(+) = 3'-dephospho-CoA + diphosphate. It functions in the pathway cofactor biosynthesis; coenzyme A biosynthesis; CoA from (R)-pantothenate: step 4/5. In terms of biological role, reversibly transfers an adenylyl group from ATP to 4'-phosphopantetheine, yielding dephospho-CoA (dPCoA) and pyrophosphate. The polypeptide is Phosphopantetheine adenylyltransferase (Bartonella bacilliformis (strain ATCC 35685 / KC583 / Herrer 020/F12,63)).